The following is a 378-amino-acid chain: Putative protein YbfL (378 aa).

This sequence belongs to the transposase 11 family.

In Escherichia coli (strain K12), this protein is Putative protein YbfL (ybfL).